The sequence spans 274 residues: NADPH-dependent 7-cyano-7-deazaguanine reductase (274 aa).

Residue 80–82 participates in substrate binding; it reads VES. 82-83 contacts NADPH; sequence SK. C181 (thioimide intermediate) is an active-site residue. Catalysis depends on D188, which acts as the Proton donor. Substrate is bound at residue 220-221; the sequence is HE. 249–250 lines the NADPH pocket; it reads RG.

This sequence belongs to the GTP cyclohydrolase I family. QueF type 2 subfamily. Homodimer.

It localises to the cytoplasm. It carries out the reaction 7-aminomethyl-7-carbaguanine + 2 NADP(+) = 7-cyano-7-deazaguanine + 2 NADPH + 3 H(+). The protein operates within tRNA modification; tRNA-queuosine biosynthesis. Catalyzes the NADPH-dependent reduction of 7-cyano-7-deazaguanine (preQ0) to 7-aminomethyl-7-deazaguanine (preQ1). In Burkholderia lata (strain ATCC 17760 / DSM 23089 / LMG 22485 / NCIMB 9086 / R18194 / 383), this protein is NADPH-dependent 7-cyano-7-deazaguanine reductase.